Here is a 256-residue protein sequence, read N- to C-terminus: Small ribosomal subunit protein eS1 (256 aa).

An N-acetylalanine; partial modification is found at Ala2.

It belongs to the eukaryotic ribosomal protein eS1 family. In terms of assembly, component of the small ribosomal subunit. Mature ribosomes consist of a small (40S) and a large (60S) subunit. The 40S subunit contains about 33 different proteins and 1 molecule of RNA (18S). The 60S subunit contains about 49 different proteins and 3 molecules of RNA (25S, 5.8S and 5S).

Its subcellular location is the cytoplasm. The chain is Small ribosomal subunit protein eS1 (rps1) from Botryotinia fuckeliana (strain B05.10) (Noble rot fungus).